The sequence spans 292 residues: Cytidine deaminase (292 aa).

CMP/dCMP-type deaminase domains are found at residues 47-167 and 186-292; these read TTLK…FGPK and DHQD…YYSL. 88–90 serves as a coordination point for substrate; sequence NQE. His-101 lines the Zn(2+) pocket. Glu-103 functions as the Proton donor in the catalytic mechanism. 2 residues coordinate Zn(2+): Cys-128 and Cys-131.

Belongs to the cytidine and deoxycytidylate deaminase family. Homodimer. Zn(2+) is required as a cofactor.

It carries out the reaction cytidine + H2O + H(+) = uridine + NH4(+). It catalyses the reaction 2'-deoxycytidine + H2O + H(+) = 2'-deoxyuridine + NH4(+). Its function is as follows. This enzyme scavenges exogenous and endogenous cytidine and 2'-deoxycytidine for UMP synthesis. This Haemophilus influenzae (strain ATCC 51907 / DSM 11121 / KW20 / Rd) protein is Cytidine deaminase.